The following is a 151-amino-acid chain: MMAEEHTDLEAQIVKDIHCKEIDLVNRDPKNINEDIVKVDFEDVIAEPVGTYSFDGVWKVSYTTFTVSKYWCYRLLSTLLGVPLALLWGFLFACISFCHIWAVVPCIKSYLIEIQCISHIYSLCIRTFCNPLFAALGQVCSSIKVVLRKEV.

Over 1–83 the chain is Cytoplasmic; that stretch reads MMAEEHTDLE…RLLSTLLGVP (83 aa). A Glycyl lysine isopeptide (Lys-Gly) (interchain with G-Cter in SUMO3) cross-link involves residue lysine 38. Positions 64-114 are required for interaction with DAG1; that stretch reads TFTVSKYWCYRLLSTLLGVPLALLWGFLFACISFCHIWAVVPCIKSYLIEI. An intramembrane region (helical) is located at residues 84–104; the sequence is LALLWGFLFACISFCHIWAVV. Over 105–151 the chain is Cytoplasmic; that stretch reads PCIKSYLIEIQCISHIYSLCIRTFCNPLFAALGQVCSSIKVVLRKEV.

The protein belongs to the caveolin family. As to quaternary structure, homooligomer. Interacts with DLG1 and KCNA5; forms a ternary complex. Interacts with TRIM72. Interacts with MUSK; may regulate MUSK signaling. Interacts with DAG1 (via its C-terminal); the interaction prevents binding of DAG1 with DMD. Interacts with DYSF. Interacts with POPDC1. Interacts with CAVIN1 and CAVIN2. Interacts with CAVIN4. Post-translationally, sumoylation with SUMO3 by PIAS4 may reduce agonist-induced internalization and desensitization of adrenergic receptor ABRD2. As to expression, expressed predominantly in muscle.

The protein localises to the golgi apparatus membrane. It localises to the cell membrane. Its subcellular location is the membrane. It is found in the caveola. The protein resides in the sarcolemma. Its function is as follows. May act as a scaffolding protein within caveolar membranes. Interacts directly with G-protein alpha subunits and can functionally regulate their activity. May also regulate voltage-gated potassium channels. Plays a role in the sarcolemma repair mechanism of both skeletal muscle and cardiomyocytes that permits rapid resealing of membranes disrupted by mechanical stress. Mediates the recruitment of CAVIN2 and CAVIN3 proteins to the caveolae. The polypeptide is Caveolin-3 (CAV3) (Homo sapiens (Human)).